The chain runs to 238 residues: Pyridoxine 5'-phosphate synthase (238 aa).

A 3-amino-2-oxopropyl phosphate-binding site is contributed by N7. Residue 9 to 10 coordinates 1-deoxy-D-xylulose 5-phosphate; that stretch reads DH. 3-amino-2-oxopropyl phosphate is bound at residue R18. The Proton acceptor role is filled by H43. 2 residues coordinate 1-deoxy-D-xylulose 5-phosphate: R45 and H50. The active-site Proton acceptor is the E70. T100 lines the 1-deoxy-D-xylulose 5-phosphate pocket. Residue H190 is the Proton donor of the active site. Residues G191 and 212–213 contribute to the 3-amino-2-oxopropyl phosphate site; that span reads GH.

This sequence belongs to the PNP synthase family. Homooctamer; tetramer of dimers.

It is found in the cytoplasm. It catalyses the reaction 3-amino-2-oxopropyl phosphate + 1-deoxy-D-xylulose 5-phosphate = pyridoxine 5'-phosphate + phosphate + 2 H2O + H(+). Its pathway is cofactor biosynthesis; pyridoxine 5'-phosphate biosynthesis; pyridoxine 5'-phosphate from D-erythrose 4-phosphate: step 5/5. Functionally, catalyzes the complicated ring closure reaction between the two acyclic compounds 1-deoxy-D-xylulose-5-phosphate (DXP) and 3-amino-2-oxopropyl phosphate (1-amino-acetone-3-phosphate or AAP) to form pyridoxine 5'-phosphate (PNP) and inorganic phosphate. This is Pyridoxine 5'-phosphate synthase from Prochlorococcus marinus (strain AS9601).